We begin with the raw amino-acid sequence, 285 residues long: (3S)-malyl-CoA thioesterase (285 aa).

The substrate site is built by R70 and E122. 2 residues coordinate Mg(2+): E122 and D148.

It belongs to the HpcH/HpaI aldolase family. Homodimer or homotrimer. Mg(2+) serves as cofactor.

It catalyses the reaction (S)-malyl-CoA + H2O = (S)-malate + CoA + H(+). Catalyzes the hydrolysis of (3S)-malyl-CoA to (3S)-malate and free CoA. Inactive towards beta-methylmalyl-CoA and other CoA esters. This chain is (3S)-malyl-CoA thioesterase, found in Cereibacter sphaeroides (strain ATCC 17029 / ATH 2.4.9) (Rhodobacter sphaeroides).